Reading from the N-terminus, the 643-residue chain is E3 ubiquitin-protein ligase Praja-1 (643 aa).

The tract at residues 1 to 363 is disordered; the sequence is MGQESSKPVW…SDDYYKYCDE (363 aa). Basic and acidic residues-rich tracts occupy residues 95-105, 145-158, and 173-183; these read DYSRYPPREYR, KFKD…EKGA, and RDVREERDKLD. The span at 200–209 shows a compositional bias: low complexity; it reads QSSVASQSSS. The span at 213–227 shows a compositional bias: basic and acidic residues; it reads LATKGDSSERERREQ. Serine 265 bears the Phosphoserine mark. The residue at position 277 (threonine 277) is a Phosphothreonine. Composition is skewed to basic and acidic residues over residues 289 to 310 and 320 to 362; these read RWRD…RGRG and KYPE…KYCD. 2 positions are modified to phosphoserine: serine 365 and serine 367. The tract at residues 380–454 is disordered; it reads RSREQTLSSS…REPSLQEEQA (75 aa). The segment covering 410–439 has biased composition (low complexity); the sequence is SASTGTSPGPGASASAGAGAGASAGSNGSN. The RING-type zinc finger occupies 595–636; that stretch reads CPICCSEYVKGEVATELPCHHYFHKPCVSIWLQKSGTCPVCR.

As to quaternary structure, binds ubiquitin-conjugating enzymes (E2s). In vitro, interacts with the ubiquitin-conjugating enzyme, UBE2D2. Substrate for E2-dependent ubiquitination. Expressed in various regions of the brain including the cerebellum, cerebral cortex, medulla, occipital pole, frontal lobe, temporal lobe and putamen. Highest levels in the cerebral cortex.

It carries out the reaction S-ubiquitinyl-[E2 ubiquitin-conjugating enzyme]-L-cysteine + [acceptor protein]-L-lysine = [E2 ubiquitin-conjugating enzyme]-L-cysteine + N(6)-ubiquitinyl-[acceptor protein]-L-lysine.. Its function is as follows. Has E2-dependent E3 ubiquitin-protein ligase activity. Ubiquitinates MAGED1 antigen leading to its subsequent degradation by proteasome. May be involved in protein sorting. This Homo sapiens (Human) protein is E3 ubiquitin-protein ligase Praja-1 (PJA1).